Here is a 304-residue protein sequence, read N- to C-terminus: N-acetylmuramic acid 6-phosphate etherase (304 aa).

Positions 60-221 constitute an SIS domain; sequence GVSVLRHGGR…STAVMVRLGY (162 aa). E88 (proton donor) is an active-site residue. The active site involves E119.

It belongs to the GCKR-like family. MurNAc-6-P etherase subfamily. In terms of assembly, homodimer.

It carries out the reaction N-acetyl-D-muramate 6-phosphate + H2O = N-acetyl-D-glucosamine 6-phosphate + (R)-lactate. It functions in the pathway amino-sugar metabolism; N-acetylmuramate degradation. Functionally, specifically catalyzes the cleavage of the D-lactyl ether substituent of MurNAc 6-phosphate, producing GlcNAc 6-phosphate and D-lactate. This chain is N-acetylmuramic acid 6-phosphate etherase, found in Thermobifida fusca (strain YX).